Here is a 230-residue protein sequence, read N- to C-terminus: Ubiquitin carboxyl-terminal hydrolase isozyme L3 (230 aa).

One can recognise a UCH catalytic domain in the interval 5 to 229 (RWLPLEANPE…LRFNAIALSA (225 aa)). The interval 8 to 13 (PLEANP) is interaction with ubiquitin. The Nucleophile role is filled by Cys95. A Phosphoserine modification is found at Ser130. Residues 152 to 159 (AHEGQTEA) are interaction with ubiquitin. Crossover loop which restricts access of large ubiquitin adducts to the active site. His169 acts as the Proton donor in catalysis. The interaction with ubiquitin stretch occupies residues 219-224 (ELRFNA).

It belongs to the peptidase C12 family. As to quaternary structure, preferentially binds diubiquitin; the interaction does not hydrolyze diubiquitin but, in vitro, inhibits the hydrolyzing activity on other substrates.

The protein localises to the cytoplasm. It catalyses the reaction Thiol-dependent hydrolysis of ester, thioester, amide, peptide and isopeptide bonds formed by the C-terminal Gly of ubiquitin (a 76-residue protein attached to proteins as an intracellular targeting signal).. Its activity is regulated as follows. Inhibited by monoubiquitin and diubiquitin. Its function is as follows. Deubiquitinating enzyme (DUB) that controls levels of cellular ubiquitin through processing of ubiquitin precursors and ubiquitinated proteins. Thiol protease that recognizes and hydrolyzes a peptide bond at the C-terminal glycine of either ubiquitin or NEDD8. Has a 10-fold preference for Arg and Lys at position P3, and exhibits a preference towards 'Lys-48'-linked ubiquitin chains. Deubiquitinates ENAC in apical compartments, thereby regulating apical membrane recycling. Indirectly increases the phosphorylation of IGFIR, AKT and FOXO1 and promotes insulin-signaling and insulin-induced adipogenesis. Required for stress-response retinal, skeletal muscle and germ cell maintenance. May be involved in working memory. Can hydrolyze UBB(+1), a mutated form of ubiquitin which is not effectively degraded by the proteasome. This Sus scrofa (Pig) protein is Ubiquitin carboxyl-terminal hydrolase isozyme L3 (UCHL3).